The sequence spans 78 residues: UPF0349 protein ABC2936 (78 aa).

Belongs to the UPF0349 family.

In Shouchella clausii (strain KSM-K16) (Alkalihalobacillus clausii), this protein is UPF0349 protein ABC2936.